The primary structure comprises 274 residues: Large ribosomal subunit protein uL2cz/uL2cy (274 aa).

Residues 225–274 form a disordered region; sequence PVDHPHGGGEGRAPIGRKKPVTPWGYPALGRRSRKRKKYSDNLILRRRTK.

This sequence belongs to the universal ribosomal protein uL2 family. As to quaternary structure, part of the 50S ribosomal subunit.

It localises to the plastid. It is found in the chloroplast. In Lotus japonicus (Lotus corniculatus var. japonicus), this protein is Large ribosomal subunit protein uL2cz/uL2cy (rpl2-A).